The chain runs to 125 residues: uncharacterized protein (125 aa).

Positions 50–73 are disordered; the sequence is QTSDFSDESSRSDSSSVTNENEVS.

This is an uncharacterized protein from Microplitis demolitor (Parasitoid wasp).